A 641-amino-acid chain; its full sequence is Choline O-acetyltransferase (641 aa).

Positions 1–29 are disordered; sequence MPILEKTPPKMAAKSPSSEEEPGLPKLPV. Ser17 carries the post-translational modification Phosphoserine. The Proton acceptor role is filled by His335. Phosphoserine is present on Ser366. CoA contacts are provided by residues 413 to 425, Ser451, and Gln552; that span reads GKTFIKQQKCSPD. Residues 619–641 form a disordered region; it reads QSGMGKPLATKEKVTRPSQVHQP.

This sequence belongs to the carnitine/choline acetyltransferase family.

It carries out the reaction choline + acetyl-CoA = acetylcholine + CoA. Functionally, catalyzes the reversible synthesis of acetylcholine (ACh) from acetyl CoA and choline at cholinergic synapses. The sequence is that of Choline O-acetyltransferase (CHAT) from Sus scrofa (Pig).